A 60-amino-acid chain; its full sequence is MPRLKVKLVKSPIGYPKDQKAALKALGLRRLQQERVLEDTPAIRGNVEKVAHLVRVEVVE.

It belongs to the universal ribosomal protein uL30 family. Part of the 50S ribosomal subunit.

This chain is Large ribosomal subunit protein uL30, found in Thermus thermophilus (strain ATCC BAA-163 / DSM 7039 / HB27).